Here is a 620-residue protein sequence, read N- to C-terminus: Probable serine/threonine-protein kinase RTK1 (620 aa).

5 disordered regions span residues 1–20, 29–130, 153–186, 210–237, and 252–271; these read MVKETPLHSSSSTSLSSLFR, AKIF…PVRT, KDAFHHPHPVRSTAHSNISTVSSAKSDTPSSNLS, QASTPGSVELQHNSSSGSDDTSSRKKKS, and HDNHHHHHHHNRGSTPTKPK. Positions 7-18 are enriched in low complexity; sequence LHSSSSTSLSSL. Residues 56–76 are compositionally biased toward basic and acidic residues; the sequence is KNTDSDQEDQIKYNKPNDRRS. A Phosphothreonine modification is found at Thr-58. Ser-60 carries the phosphoserine modification. Composition is skewed to polar residues over residues 95–107, 165–186, and 210–222; these read VASSTLTGISPTS, TAHSNISTVSSAKSDTPSSNLS, and QASTPGSVELQHN. The residue at position 216 (Ser-216) is a Phosphoserine. The segment covering 254–263 has biased composition (basic residues); it reads NHHHHHHHNR. A Protein kinase domain is found at 302 to 575; the sequence is GIPGRKLGEG…MNDVVKDDWL (274 aa). ATP is bound by residues 308-316 and Lys-330; that span reads LGEGASGSV. Lys-334 is covalently cross-linked (Glycyl lysine isopeptide (Lys-Gly) (interchain with G-Cter in ubiquitin)). The Proton acceptor role is filled by Asp-430.

The protein belongs to the protein kinase superfamily. Ser/Thr protein kinase family. Interacts with ribosome biogenesis factors ARC1, CKA2 and GUS1.

The catalysed reaction is L-seryl-[protein] + ATP = O-phospho-L-seryl-[protein] + ADP + H(+). It carries out the reaction L-threonyl-[protein] + ATP = O-phospho-L-threonyl-[protein] + ADP + H(+). In terms of biological role, probable serine/threonine-protein kinase that may be involved in ribosome biogenesis. In Saccharomyces cerevisiae (strain ATCC 204508 / S288c) (Baker's yeast), this protein is Probable serine/threonine-protein kinase RTK1 (RTK1).